The sequence spans 216 residues: Protein shisa-5 (216 aa).

A signal peptide spans Met-1–Ser-26. The Extracellular segment spans residues Glu-27 to Arg-93. The chain crosses the membrane as a helical span at residues Phe-94–Val-114. The Cytoplasmic segment spans residues Cys-115–Pro-216.

Belongs to the shisa family. In terms of assembly, interacts with PDCD6; PDCD6 can stabilize SHISA5.

Its subcellular location is the endoplasmic reticulum membrane. It is found in the nucleus membrane. Functionally, can induce apoptosis in a caspase-dependent manner and plays a role in p53/TP53-dependent apoptosis. The polypeptide is Protein shisa-5 (SHISA5) (Bos taurus (Bovine)).